The following is an 839-amino-acid chain: MAKQQDQIDKIRQELAQSAIKNISLSSELERSFMEYAMSVIVARALPDARDGLKPVHRRVLYGAYTGGMHHDRPFKKSARIVGDVMSKFHPHGDMAIYDTMSRMAQDFSLRYLLIDGHGNFGSIDGDRPAAQRYTEARLSKLAGELLRDIDKDTVDFVANYDGEEQEPTVLPAAFPNLLANGSSGIAVGMSTSIPSHNLSELIQGLILLIDNPDCTINDLLGVIKGPDFPTGANIIYTKGIESYFETGKGNVVIRSKVSIEQLPTRAALVVTEIPYMVNKTSLIEKIVELVKAEEITGIADIRDESSREGIRLVIEVKRDTVPEVLLNQLFKSTRLQVRFPVNMLALVKGAPKLLNMKQALTVYLEHQLDVLIRKTQFNLKKYQERFHILSGLLIAALNIDEVIAIIKKSANNQVAMEALHERFGLDEIQARAVLDMRLRSLSVLEVNKLQTEQQELKALIEFCQQVLADKQLQLKLIKEQLTKINEQFGDPRRSEILYGISEDIDDEDLITQENVVITMSTNGYLKRIGVDAYNLQHRGGVGVKGLTTYTDDSISQLLVCSTHSDLLFFTDKGKVYRIRAHQIPPGFRTNKGIPAVNLIKIDKDEKICALISVNDYQNGYFFFCTKNGTIKRTSLSEFANILSIGKRAILFKENDVLFSVIRTSGQDDIFIGSTAGFVVRFHEDTVRPLSRAAMGVLGINLNQCEFVNGLSTSSNGSLLLSVGQNGIGKLTSIDKYRLTKRNAKGVKTLRVTAKTGPVVTTTTVFGNEDLLMISSAGKIVRISLEQLSEQRKNTSGVKLIKLKEKERLETVTIFKKEEAIKTTTATETDDVGSKQITQ.

Residues 46–510 (LPDARDGLKP…ISEDIDDEDL (465 aa)) enclose the Topo IIA-type catalytic domain. The active-site O-(5'-phospho-DNA)-tyrosine intermediate is the Tyr134. Positions 537–543 (QHRGGVG) match the GyrA-box motif.

This sequence belongs to the type II topoisomerase GyrA/ParC subunit family. In terms of assembly, heterotetramer, composed of two GyrA and two GyrB chains. In the heterotetramer, GyrA contains the active site tyrosine that forms a transient covalent intermediate with DNA, while GyrB binds cofactors and catalyzes ATP hydrolysis.

It localises to the cytoplasm. It catalyses the reaction ATP-dependent breakage, passage and rejoining of double-stranded DNA.. Functionally, a type II topoisomerase that negatively supercoils closed circular double-stranded (ds) DNA in an ATP-dependent manner to modulate DNA topology and maintain chromosomes in an underwound state. Negative supercoiling favors strand separation, and DNA replication, transcription, recombination and repair, all of which involve strand separation. Also able to catalyze the interconversion of other topological isomers of dsDNA rings, including catenanes and knotted rings. Type II topoisomerases break and join 2 DNA strands simultaneously in an ATP-dependent manner. The protein is DNA gyrase subunit A of Mycoplasma pneumoniae (strain ATCC 29342 / M129 / Subtype 1) (Mycoplasmoides pneumoniae).